The chain runs to 68 residues: Large ribosomal subunit protein eL24 (68 aa).

Zn(2+) is bound by residues cysteine 7, cysteine 10, cysteine 33, and cysteine 37. Residues 7–37 (CDFCGRIIEPGTGKMFVKNDGTILWFCSSKC) form a C4-type zinc finger.

The protein belongs to the eukaryotic ribosomal protein eL24 family. As to quaternary structure, part of the 50S ribosomal subunit. Forms a cluster with proteins L3 and L14. It depends on Zn(2+) as a cofactor.

Binds to the 23S rRNA. This Methanopyrus kandleri (strain AV19 / DSM 6324 / JCM 9639 / NBRC 100938) protein is Large ribosomal subunit protein eL24.